Reading from the N-terminus, the 210-residue chain is Na(+)-translocating NADH-quinone reductase subunit D (210 aa).

The next 6 helical transmembrane spans lie at 10–30 (ILFAPFLDNNPIALQVLGVCS), 42–62 (FVMTLAVMFVTAFSNLFVSLI), 72–92 (IIVQMAIIASLVIVVDQVLKA), 103–123 (VFVGLIITNCIVMGRAEAYAM), 131–151 (FIDGVGNGLGYGFVLITVAFF), and 178–198 (NGLMLLAPSAFFLIGFMIWAI).

The protein belongs to the NqrDE/RnfAE family. Composed of six subunits; NqrA, NqrB, NqrC, NqrD, NqrE and NqrF.

The protein resides in the cell inner membrane. The enzyme catalyses a ubiquinone + n Na(+)(in) + NADH + H(+) = a ubiquinol + n Na(+)(out) + NAD(+). Its function is as follows. NQR complex catalyzes the reduction of ubiquinone-1 to ubiquinol by two successive reactions, coupled with the transport of Na(+) ions from the cytoplasm to the periplasm. NqrA to NqrE are probably involved in the second step, the conversion of ubisemiquinone to ubiquinol. The protein is Na(+)-translocating NADH-quinone reductase subunit D of Photobacterium profundum (strain SS9).